We begin with the raw amino-acid sequence, 397 residues long: MIVLVINSGSSSLKYQLFDMRKEALLAKGLVERIGLSGSMLTHRPIGKDQVVIETEILNHDRAIQLTVEALTHEDHGVVASMREIDAVGHRVAHGGDTFSDSAVVNEQSLANIRALFEVAPLHNPPAVMGIEACQHMLPGVPQVAVFDTAFHQTIPGYAYNYALPYELAAKHSLRRYGFHGTSHKYVAQWAAAMLGRPLEDLRIITCHLGNGASITAIDRGRSVDTSMGFTPLEGLIMGTRVGDMDPAAVPFLMEKEGLTTGQINDLMNKKSGVLGVSGVSSDFRDLEEEAAKGNERCQLALDMFAYRVKKYIGAYAAVMNGVDAIVFTAGLGENSPSMRQSVCSGLSYLGVQLDEEKNKGRGEADISAAGATCRVMVVPTNEELMIARDTYRLLKG.

N7 provides a ligand contact to Mg(2+). Residue K14 participates in ATP binding. R91 lines the substrate pocket. The active-site Proton donor/acceptor is the D148. Residues 208-212 (HLGNG), 283-285 (DFR), and 331-335 (GLGEN) contribute to the ATP site. E383 contributes to the Mg(2+) binding site.

The protein belongs to the acetokinase family. In terms of assembly, homodimer. Mg(2+) serves as cofactor. Requires Mn(2+) as cofactor.

It localises to the cytoplasm. It catalyses the reaction acetate + ATP = acetyl phosphate + ADP. The protein operates within metabolic intermediate biosynthesis; acetyl-CoA biosynthesis; acetyl-CoA from acetate: step 1/2. Its function is as follows. Catalyzes the formation of acetyl phosphate from acetate and ATP. Can also catalyze the reverse reaction. The protein is Acetate kinase of Heliobacterium modesticaldum (strain ATCC 51547 / Ice1).